The sequence spans 413 residues: Putative F-box protein At3g17560 (413 aa).

The region spanning 9–55 (TKLLFDLPQDVIEEIFSKVPVTCLRRIRSTCKRLYALLKDRGFIRKH) is the F-box domain.

The sequence is that of Putative F-box protein At3g17560 from Arabidopsis thaliana (Mouse-ear cress).